Consider the following 50-residue polypeptide: Bacteriocin BacSp222 (50 aa).

An N-formylmethionine modification is found at M1.

It localises to the secreted. Functionally, has bacteriolytic activity against Gram-positive bacteria B.subtilis, L.lactis and M.luteus and several species from genus Staphylococcus including methicillin-resistant S.aureus, with MIC values ranging from 0.11 uM to 7.8 uM. Has no activity against Gram-negative bacteria or fungi. In vitro, has a dose-dependent cytolytic effect on eukaryotic cells. In Staphylococcus pseudintermedius, this protein is Bacteriocin BacSp222.